The chain runs to 280 residues: Cycloeucalenol cycloisomerase (280 aa).

6 helical membrane-spanning segments follow: residues 22–42, 53–73, 89–109, 167–187, 201–221, and 244–264; these read LFFL…VVPY, YLLL…LLVG, ANLW…HYFF, FEAA…TIAI, MYRV…PMFF, and AMLV…IVPL.

It is found in the membrane. The catalysed reaction is cycloeucalenol = obtusifoliol. In terms of biological role, converts pentacyclic cyclopropyl sterols to tetracyclic sterols. The polypeptide is Cycloeucalenol cycloisomerase (CPI1) (Arabidopsis thaliana (Mouse-ear cress)).